Consider the following 149-residue polypeptide: Macrodomain Ter protein (149 aa).

It belongs to the MatP family. In terms of assembly, homodimer.

Its subcellular location is the cytoplasm. In terms of biological role, required for spatial organization of the terminus region of the chromosome (Ter macrodomain) during the cell cycle. Prevents early segregation of duplicated Ter macrodomains during cell division. Binds specifically to matS, which is a 13 bp signature motif repeated within the Ter macrodomain. The sequence is that of Macrodomain Ter protein from Vibrio campbellii (strain ATCC BAA-1116).